The following is a 388-amino-acid chain: Succinate--CoA ligase [ADP-forming] subunit beta (388 aa).

The ATP-grasp domain maps to 9–245 (KELLAGYGLP…KSQENERELK (237 aa)). Residues K46, 53–55 (GRG), E100, Y103, and E108 contribute to the ATP site. N200 and D214 together coordinate Mg(2+). Substrate is bound by residues N265 and 322 to 324 (GIV).

The protein belongs to the succinate/malate CoA ligase beta subunit family. In terms of assembly, heterotetramer of two alpha and two beta subunits. The cofactor is Mg(2+).

The enzyme catalyses succinate + ATP + CoA = succinyl-CoA + ADP + phosphate. It catalyses the reaction GTP + succinate + CoA = succinyl-CoA + GDP + phosphate. It participates in carbohydrate metabolism; tricarboxylic acid cycle; succinate from succinyl-CoA (ligase route): step 1/1. In terms of biological role, succinyl-CoA synthetase functions in the citric acid cycle (TCA), coupling the hydrolysis of succinyl-CoA to the synthesis of either ATP or GTP and thus represents the only step of substrate-level phosphorylation in the TCA. The beta subunit provides nucleotide specificity of the enzyme and binds the substrate succinate, while the binding sites for coenzyme A and phosphate are found in the alpha subunit. This Neisseria meningitidis serogroup C (strain 053442) protein is Succinate--CoA ligase [ADP-forming] subunit beta.